The following is a 94-amino-acid chain: Acylphosphatase (94 aa).

The region spanning 8 to 94 is the Acylphosphatase-like domain; that stretch reads TLFIIVHGKV…GRRFKHFAQH (87 aa). Residues R23 and N41 contribute to the active site. A disordered region spans residues 69 to 94; the sequence is PPAASVTELESRREDGGRRFKHFAQH. Positions 77–86 are enriched in basic and acidic residues; sequence LESRREDGGR.

The protein belongs to the acylphosphatase family.

It catalyses the reaction an acyl phosphate + H2O = a carboxylate + phosphate + H(+). This Bordetella avium (strain 197N) protein is Acylphosphatase (acyP).